The primary structure comprises 1150 residues: PAN2-PAN3 deadenylation complex catalytic subunit PAN2 (1150 aa).

WD repeat units follow at residues 26–67 (AHHS…MEFQ), 114–156 (GHVN…ITKE), 158–194 (PAPN…VINT), and 290–328 (GHTH…VSFV). Positions 326-471 (SFVDQGLPVE…IRTDIESLKS (146 aa)) are linker. One can recognise a USP domain in the interval 472–862 (VVPNMYHLFE…TPLVVMFQLK (391 aa)). Residues 911 to 1079 (AIDAEFVLAK…HDSIEDANTA (169 aa)) enclose the Exonuclease domain. Positions 913, 915, 1022, and 1075 each coordinate a divalent metal cation. The tract at residues 1118–1150 (GQSAQRTETPPMVDDAQPGALLPYQPPELLQGS) is disordered.

The protein belongs to the peptidase C19 family. PAN2 subfamily. Forms a heterotrimer with an asymmetric homodimer of the regulatory subunit PAN3 to form the poly(A)-nuclease (PAN) deadenylation complex. A divalent metal cation is required as a cofactor.

It localises to the cytoplasm. It catalyses the reaction Exonucleolytic cleavage of poly(A) to 5'-AMP.. With respect to regulation, positively regulated by the regulatory subunit PAN3. Functionally, catalytic subunit of the poly(A)-nuclease (PAN) deadenylation complex, one of two cytoplasmic mRNA deadenylases involved in mRNA turnover. PAN specifically shortens poly(A) tails of RNA and the activity is stimulated by poly(A)-binding protein PAB1. PAN deadenylation is followed by rapid degradation of the shortened mRNA tails by the CCR4-NOT complex. Deadenylated mRNAs are then degraded by two alternative mechanisms, namely exosome-mediated 3'-5' exonucleolytic degradation, or deadenylation-dependent mRNA decaping and subsequent 5'-3' exonucleolytic degradation by XRN1. May also be involved in post-transcriptional maturation of mRNA poly(A) tails. This Pyricularia oryzae (strain 70-15 / ATCC MYA-4617 / FGSC 8958) (Rice blast fungus) protein is PAN2-PAN3 deadenylation complex catalytic subunit PAN2.